Here is a 187-residue protein sequence, read N- to C-terminus: ATP synthase subunit b 2 (187 aa).

Residues 1-25 (MAESHGGAKGPAAGAHTGAEGGHGG) are disordered. A helical transmembrane segment spans residues 39–59 (LVSLAIFFVVLYVIVSKLALP). The disordered stretch occupies residues 103-122 (RAQAIGNESRDKANAQAETE). The segment covering 110–122 (ESRDKANAQAETE) has biased composition (basic and acidic residues).

This sequence belongs to the ATPase B chain family. F-type ATPases have 2 components, F(1) - the catalytic core - and F(0) - the membrane proton channel. F(1) has five subunits: alpha(3), beta(3), gamma(1), delta(1), epsilon(1). F(0) has three main subunits: a(1), b(2) and c(10-14). The alpha and beta chains form an alternating ring which encloses part of the gamma chain. F(1) is attached to F(0) by a central stalk formed by the gamma and epsilon chains, while a peripheral stalk is formed by the delta and b chains.

It localises to the cell inner membrane. Functionally, f(1)F(0) ATP synthase produces ATP from ADP in the presence of a proton or sodium gradient. F-type ATPases consist of two structural domains, F(1) containing the extramembraneous catalytic core and F(0) containing the membrane proton channel, linked together by a central stalk and a peripheral stalk. During catalysis, ATP synthesis in the catalytic domain of F(1) is coupled via a rotary mechanism of the central stalk subunits to proton translocation. Component of the F(0) channel, it forms part of the peripheral stalk, linking F(1) to F(0). The b'-subunit is a diverged and duplicated form of b found in plants and photosynthetic bacteria. This Bradyrhizobium diazoefficiens (strain JCM 10833 / BCRC 13528 / IAM 13628 / NBRC 14792 / USDA 110) protein is ATP synthase subunit b 2 (atpF2).